Reading from the N-terminus, the 231-residue chain is Ribosyldihydronicotinamide dehydrogenase [quinone] (231 aa).

FAD is bound by residues His-12 and 18–21; that span reads FNGS. The residue at position 80 (Ser-80) is a Phosphoserine. 104–107 contributes to the FAD binding site; the sequence is LYWF. 127 to 129 is a binding site for substrate; that stretch reads FDI. Residues 148-151 and Tyr-156 contribute to the FAD site; that span reads TTGG. Residues His-174 and His-178 each contribute to the Zn(2+) site. Glu-194 lines the FAD pocket. At Ser-197 the chain carries Phosphoserine. Residue Arg-201 participates in FAD binding. A Zn(2+)-binding site is contributed by Cys-223.

Belongs to the NAD(P)H dehydrogenase (quinone) family. Homodimer. It depends on Zn(2+) as a cofactor. FAD serves as cofactor.

It localises to the cytoplasm. The enzyme catalyses 1-(beta-D-ribofuranosyl)-1,4-dihydronicotinamide + a quinone + H(+) = beta-nicotinamide D-riboside + a quinol. With respect to regulation, inhibited by melatonin, resveratrol and 5-hydroxytryptamine. In terms of biological role, the enzyme apparently serves as a quinone reductase in connection with conjugation reactions of hydroquinones involved in detoxification pathways as well as in biosynthetic processes such as the vitamin K-dependent gamma-carboxylation of glutamate residues in prothrombin synthesis. The polypeptide is Ribosyldihydronicotinamide dehydrogenase [quinone] (NQO2) (Homo sapiens (Human)).